Consider the following 107-residue polypeptide: Flagellar hook-basal body complex protein FliE (107 aa).

The protein belongs to the FliE family.

It localises to the bacterial flagellum basal body. This Mesorhizobium japonicum (strain LMG 29417 / CECT 9101 / MAFF 303099) (Mesorhizobium loti (strain MAFF 303099)) protein is Flagellar hook-basal body complex protein FliE.